A 512-amino-acid chain; its full sequence is Cytochrome P450 72A15 (512 aa).

Residues Glu2–Trp22 traverse the membrane as a helical segment. Position 460 (Cys460) interacts with heme.

Belongs to the cytochrome P450 family. Requires heme as cofactor.

The protein localises to the membrane. This chain is Cytochrome P450 72A15 (CYP72A15), found in Arabidopsis thaliana (Mouse-ear cress).